Consider the following 820-residue polypeptide: Quinate repressor protein (820 aa).

Positions 25–79 (SFEQMLLQQDSNESSRRTSPSRTHSRVDLERHSSHIVSLSSSNGSPSLEDPENRL) are disordered. Positions 59–71 (HIVSLSSSNGSPS) are enriched in low complexity.

This sequence in the N-terminal section; belongs to the shikimate kinase family. In the 2nd section; belongs to the type-I 3-dehydroquinase family. It in the C-terminal section; belongs to the shikimate dehydrogenase family. In terms of assembly, interacts with qutA; transcriptional activator of the quinate utilization pathway genes.

Multi-domain repressor protein that negatively regulates transcription of the quinate utilization pathway genes. May mediate its repressor activity by binding directly to the qutA activator protein. This Talaromyces stipitatus (strain ATCC 10500 / CBS 375.48 / QM 6759 / NRRL 1006) (Penicillium stipitatum) protein is Quinate repressor protein (qutR).